A 255-amino-acid polypeptide reads, in one-letter code: Coiled-coil domain-containing 92B (255 aa).

Residues 28–90 (LRDLHLEILR…AAANAELRRE (63 aa)) adopt a coiled-coil conformation. The tract at residues 149 to 255 (QRLQAPRPGP…SQPSAPGDPE (107 aa)) is disordered. Residues 166–177 (PRRRALRARRPP) are compositionally biased toward basic residues. Positions 242-255 (QPAPSQPSAPGDPE) are enriched in pro residues.

This Homo sapiens (Human) protein is Coiled-coil domain-containing 92B.